Here is a 108-residue protein sequence, read N- to C-terminus: Large ribosomal subunit protein bL21 (108 aa).

Belongs to the bacterial ribosomal protein bL21 family. As to quaternary structure, part of the 50S ribosomal subunit. Contacts protein L20.

In terms of biological role, this protein binds to 23S rRNA in the presence of protein L20. In Orientia tsutsugamushi (strain Ikeda) (Rickettsia tsutsugamushi), this protein is Large ribosomal subunit protein bL21.